A 208-amino-acid chain; its full sequence is FMN-dependent NADH:quinone oxidoreductase (208 aa).

FMN-binding positions include 17-19 (SNS), 99-102 (MWNL), and 143-146 (SRGG).

It belongs to the azoreductase type 1 family. Homodimer. The cofactor is FMN.

It catalyses the reaction 2 a quinone + NADH + H(+) = 2 a 1,4-benzosemiquinone + NAD(+). The catalysed reaction is N,N-dimethyl-1,4-phenylenediamine + anthranilate + 2 NAD(+) = 2-(4-dimethylaminophenyl)diazenylbenzoate + 2 NADH + 2 H(+). In terms of biological role, quinone reductase that provides resistance to thiol-specific stress caused by electrophilic quinones. Its function is as follows. Also exhibits azoreductase activity. Catalyzes the reductive cleavage of the azo bond in aromatic azo compounds to the corresponding amines. The chain is FMN-dependent NADH:quinone oxidoreductase from Staphylococcus aureus (strain bovine RF122 / ET3-1).